Consider the following 592-residue polypeptide: Aspartate--tRNA(Asp/Asn) ligase (592 aa).

Glu182 is a binding site for L-aspartate. The interval 206-209 is aspartate; sequence QIFK. L-aspartate is bound at residue Arg228. Residues 228-230 and Gln237 contribute to the ATP site; that span reads RDE. His455 contributes to the L-aspartate binding site. Glu489 is an ATP binding site. Arg496 is an L-aspartate binding site. An ATP-binding site is contributed by 541–544; it reads GLDR.

Belongs to the class-II aminoacyl-tRNA synthetase family. Type 1 subfamily. Homodimer.

Its subcellular location is the cytoplasm. It catalyses the reaction tRNA(Asx) + L-aspartate + ATP = L-aspartyl-tRNA(Asx) + AMP + diphosphate. Functionally, aspartyl-tRNA synthetase with relaxed tRNA specificity since it is able to aspartylate not only its cognate tRNA(Asp) but also tRNA(Asn). Reaction proceeds in two steps: L-aspartate is first activated by ATP to form Asp-AMP and then transferred to the acceptor end of tRNA(Asp/Asn). The chain is Aspartate--tRNA(Asp/Asn) ligase from Thermoanaerobacter pseudethanolicus (strain ATCC 33223 / 39E) (Clostridium thermohydrosulfuricum).